The chain runs to 274 residues: MLTPMVAGGVVFPGLFLLSKNTLQRLPQLRWEEADAVIVSARLVSSVQAIMASTAGYIVSTSCKHIIDDQHWLSSAYTQFAVPYFIYDIYAMFLCHWHKHQVKGHGGDDGAARAPGSTWAIARGYLHKEFLMVLHHAAMVLVCFPLSVVWRQGKGDFFLGCMLMAEVSTPFVCLGKILIQYKQQHTLLHKVNGALMLLSFLCCRVLLFPYLYWAYGRHAGLPLLAVPLAIPAHVNLGAALLLAPQLYWFFLICRGACRLFWPRSRPPPACQAQD.

The 228-residue stretch at Ala-34 to Trp-261 folds into the TLC domain. Helical transmembrane passes span Phe-130 to Trp-150, Leu-159 to Ile-179, Ala-194 to Ala-214, and Leu-223 to Ala-243.

Expressed in testis. Expressed in the retina with higher expression levels in the macular than in the peripheral region.

It localises to the golgi apparatus membrane. The protein localises to the endoplasmic reticulum membrane. The catalysed reaction is sphing-4-enine + octadecanoyl-CoA = N-octadecanoylsphing-4-enine + CoA + H(+). The enzyme catalyses eicosanoyl-CoA + sphing-4-enine = N-eicosanoyl-sphing-4-enine + CoA + H(+). It catalyses the reaction sphing-4-enine + hexadecanoyl-CoA = N-hexadecanoylsphing-4-enine + CoA + H(+). Functionally, involved in ceramide synthesis. This chain is Ceramide synthase, found in Homo sapiens (Human).